Consider the following 37-residue polypeptide: Large ribosomal subunit protein bL36 (37 aa).

It belongs to the bacterial ribosomal protein bL36 family.

The sequence is that of Large ribosomal subunit protein bL36 from Alkaliphilus metalliredigens (strain QYMF).